The chain runs to 416 residues: MSLSSKLTVKDLSLAGKRVFIRVDFNVPLDGKTITSNQRIVAALPTIKYVLEQGPKAVVLASHLGRPNGERNEKYSLAPVAAELEKLLGQKVNFLDDCVGEHVTAAVNGAAAGSVFLLENLRFHIEEEGSRKVDGEKVKASAEDVQKFRQGLMSLADVYVNDAFGTAHRAHSSMVGFELPERAGGFLLSRELEYFSKALENPTRPFLAILGGAKVADKIQLIDNLLDKVDSIVIGGGMAFTFKKVLENMEIGNSIYDKAGAEIVPKLAEKAKKNGVKIVLPVDFVIGDDFSQDANTKIVSASEGIPSGWEGLDCGPESRKLFSETIASAKTIVWNGPPGVFEIPKFSEGTQAMLAAAVKASEAGSTVIIGGGDTATVAKKYGVVEKISHVSTGGGASLELLEGKDLPGVTFLSSKQ.

(2R)-3-phosphoglycerate-binding residues include valine 23, aspartate 24, phenylalanine 25, asparagine 26, glutamine 38, arginine 39, serine 62, histidine 63, glycine 65, arginine 66, leucine 121, arginine 122, histidine 168, and arginine 169. Glycine 212 contacts ADP. Residue glycine 212 coordinates CDP. AMP contacts are provided by alanine 213 and lysine 214. Alanine 213 provides a ligand contact to ATP. Alanine 213 is a binding site for Mg(2+). 2 residues coordinate Mg(2+): alanine 216 and aspartate 217. CDP is bound at residue aspartate 217. Residue lysine 218 participates in AMP binding. Lysine 218 is an ATP binding site. An ADP-binding site is contributed by glycine 236. Residue glycine 236 coordinates CDP. Residues glycine 237 and glycine 311 each coordinate AMP. Residues glycine 237 and glycine 311 each coordinate ATP. Residues glycine 336 and phenylalanine 341 each contribute to the CDP site. Residue phenylalanine 341 coordinates ADP. Position 342 (glutamate 342) interacts with AMP. Positions 342, 373, and 374 each coordinate ATP. Aspartate 373 is a Mg(2+) binding site.

The protein belongs to the phosphoglycerate kinase family. Monomer. It depends on Mg(2+) as a cofactor.

The protein resides in the cytoplasm. Its subcellular location is the mitochondrion. It carries out the reaction (2R)-3-phosphoglycerate + ATP = (2R)-3-phospho-glyceroyl phosphate + ADP. It participates in carbohydrate degradation; glycolysis; pyruvate from D-glyceraldehyde 3-phosphate: step 2/5. In terms of biological role, catalyzes one of the two ATP producing reactions in the glycolytic pathway via the reversible conversion of 1,3-diphosphoglycerate to 3-phosphoglycerate. Both L- and D- forms of purine and pyrimidine nucleotides can be used as substrates, but the activity is much lower on pyrimidines. Negatively regulates the biosynthesis of acetyl-CoA from pyruvate in the mitochondrion. The protein is Phosphoglycerate kinase (PGK1) of Eremothecium gossypii (strain ATCC 10895 / CBS 109.51 / FGSC 9923 / NRRL Y-1056) (Yeast).